The primary structure comprises 190 residues: Elongation factor P (190 aa).

Lysine 34 carries the post-translational modification N6-(3,6-diaminohexanoyl)-5-hydroxylysine.

It belongs to the elongation factor P family. May be beta-lysylated on the epsilon-amino group of Lys-34 by the combined action of EpmA and EpmB, and then hydroxylated on the C5 position of the same residue by EpmC (if this protein is present). Lysylation is critical for the stimulatory effect of EF-P on peptide-bond formation. The lysylation moiety may extend toward the peptidyltransferase center and stabilize the terminal 3-CCA end of the tRNA. Hydroxylation of the C5 position on Lys-34 may allow additional potential stabilizing hydrogen-bond interactions with the P-tRNA.

Its subcellular location is the cytoplasm. It functions in the pathway protein biosynthesis; polypeptide chain elongation. Functionally, involved in peptide bond synthesis. Alleviates ribosome stalling that occurs when 3 or more consecutive Pro residues or the sequence PPG is present in a protein, possibly by augmenting the peptidyl transferase activity of the ribosome. Modification of Lys-34 is required for alleviation. This chain is Elongation factor P, found in Psychrobacter cryohalolentis (strain ATCC BAA-1226 / DSM 17306 / VKM B-2378 / K5).